We begin with the raw amino-acid sequence, 294 residues long: DNA adenine methyltransferase YhdJ (294 aa).

The tract at residues 275–294 (TGNLSKRSRLSEVDPDLITK) is disordered. Basic and acidic residues predominate over residues 283–294 (RLSEVDPDLITK).

Belongs to the N(4)/N(6)-methyltransferase family.

The enzyme catalyses a 2'-deoxyadenosine in DNA + S-adenosyl-L-methionine = an N(6)-methyl-2'-deoxyadenosine in DNA + S-adenosyl-L-homocysteine + H(+). In terms of biological role, a beta subtype methylase, recognizes the double-stranded sequence 5'-ATGCAT-3' and methylates A-5. The polypeptide is DNA adenine methyltransferase YhdJ (yhdJ) (Escherichia coli (strain K12)).